Reading from the N-terminus, the 84-residue chain is UPF0291 protein SMU_447 (84 aa).

Positions 57–84 (EGNDITPAKLKEIQRQKGIHGRKPEDNS) are disordered.

The protein belongs to the UPF0291 family.

It localises to the cytoplasm. The polypeptide is UPF0291 protein SMU_447 (Streptococcus mutans serotype c (strain ATCC 700610 / UA159)).